The sequence spans 161 residues: NAD(P)H-quinone oxidoreductase subunit I, chloroplastic (161 aa).

4Fe-4S ferredoxin-type domains are found at residues 55 to 84 and 95 to 124; these read GRIHFEFDKCIACEVCVRVCPIDLPVVDWK and LNYSIDFGICIFCGNCIEYCPTNCLSMTEE. [4Fe-4S] cluster contacts are provided by Cys64, Cys67, Cys70, Cys74, Cys104, Cys107, Cys110, and Cys114.

Belongs to the complex I 23 kDa subunit family. In terms of assembly, NDH is composed of at least 16 different subunits, 5 of which are encoded in the nucleus. [4Fe-4S] cluster is required as a cofactor.

The protein resides in the plastid. The protein localises to the chloroplast thylakoid membrane. It catalyses the reaction a plastoquinone + NADH + (n+1) H(+)(in) = a plastoquinol + NAD(+) + n H(+)(out). It carries out the reaction a plastoquinone + NADPH + (n+1) H(+)(in) = a plastoquinol + NADP(+) + n H(+)(out). Its function is as follows. NDH shuttles electrons from NAD(P)H:plastoquinone, via FMN and iron-sulfur (Fe-S) centers, to quinones in the photosynthetic chain and possibly in a chloroplast respiratory chain. The immediate electron acceptor for the enzyme in this species is believed to be plastoquinone. Couples the redox reaction to proton translocation, and thus conserves the redox energy in a proton gradient. This chain is NAD(P)H-quinone oxidoreductase subunit I, chloroplastic, found in Lotus japonicus (Lotus corniculatus var. japonicus).